The sequence spans 179 residues: uncharacterized protein (179 aa).

This is an uncharacterized protein from Encephalitozoon cuniculi (strain GB-M1) (Microsporidian parasite).